The sequence spans 463 residues: Nuclear hormone receptor family member nhr-3 (463 aa).

The nuclear receptor DNA-binding region spans 50–125 (STICSVCCDE…VGMEPDAIRP (76 aa)). 2 NR C4-type zinc fingers span residues 53–73 (CSVC…CFGC) and 89–113 (CRYS…FQKC). Positions 121 to 131 (DAIRPDRDKTG) are enriched in basic and acidic residues. A disordered region spans residues 121–143 (DAIRPDRDKTGRQKNPRRNTEGS). In terms of domain architecture, NR LBD spans 199–462 (EIENIVIQLQ…VLEELLFLDR (264 aa)).

Belongs to the nuclear hormone receptor family.

Its subcellular location is the nucleus. Its function is as follows. Orphan nuclear receptor. This chain is Nuclear hormone receptor family member nhr-3 (nhr-3), found in Caenorhabditis elegans.